The primary structure comprises 601 residues: NADH-quinone oxidoreductase subunit C/D (601 aa).

The interval 1–191 (MKLTREFPSN…DPFMLDAVKQ (191 aa)) is NADH dehydrogenase I subunit C. The NADH dehydrogenase I subunit D stretch occupies residues 215 to 601 (DYMFLNLGPN…IDFVMSDVDR (387 aa)).

It in the N-terminal section; belongs to the complex I 30 kDa subunit family. In the C-terminal section; belongs to the complex I 49 kDa subunit family. NDH-1 is composed of 13 different subunits. Subunits NuoB, CD, E, F, and G constitute the peripheral sector of the complex.

Its subcellular location is the cell inner membrane. The catalysed reaction is a quinone + NADH + 5 H(+)(in) = a quinol + NAD(+) + 4 H(+)(out). Its function is as follows. NDH-1 shuttles electrons from NADH, via FMN and iron-sulfur (Fe-S) centers, to quinones in the respiratory chain. The immediate electron acceptor for the enzyme in this species is believed to be ubiquinone. Couples the redox reaction to proton translocation (for every two electrons transferred, four hydrogen ions are translocated across the cytoplasmic membrane), and thus conserves the redox energy in a proton gradient. The polypeptide is NADH-quinone oxidoreductase subunit C/D (Aeromonas hydrophila subsp. hydrophila (strain ATCC 7966 / DSM 30187 / BCRC 13018 / CCUG 14551 / JCM 1027 / KCTC 2358 / NCIMB 9240 / NCTC 8049)).